Consider the following 208-residue polypeptide: Protein-L-isoaspartate O-methyltransferase (208 aa).

The active site involves serine 59.

This sequence belongs to the methyltransferase superfamily. L-isoaspartyl/D-aspartyl protein methyltransferase family.

The protein localises to the cytoplasm. The enzyme catalyses [protein]-L-isoaspartate + S-adenosyl-L-methionine = [protein]-L-isoaspartate alpha-methyl ester + S-adenosyl-L-homocysteine. In terms of biological role, catalyzes the methyl esterification of L-isoaspartyl residues in peptides and proteins that result from spontaneous decomposition of normal L-aspartyl and L-asparaginyl residues. It plays a role in the repair and/or degradation of damaged proteins. The sequence is that of Protein-L-isoaspartate O-methyltransferase from Erwinia tasmaniensis (strain DSM 17950 / CFBP 7177 / CIP 109463 / NCPPB 4357 / Et1/99).